The following is a 320-amino-acid chain: Cytochrome f (320 aa).

Positions 1–35 are cleaved as a signal peptide; sequence MQNRKTFSWVKEQMTRSIYVSIMIYVITRASISNA. Heme contacts are provided by Tyr36, Cys56, Cys59, and His60. The helical transmembrane segment at 286–306 threads the bilayer; that stretch reads VQGLLFFLASVILAQIFLVLK.

This sequence belongs to the cytochrome f family. As to quaternary structure, the 4 large subunits of the cytochrome b6-f complex are cytochrome b6, subunit IV (17 kDa polypeptide, petD), cytochrome f and the Rieske protein, while the 4 small subunits are PetG, PetL, PetM and PetN. The complex functions as a dimer. Requires heme as cofactor.

The protein resides in the plastid. Its subcellular location is the chloroplast thylakoid membrane. Its function is as follows. Component of the cytochrome b6-f complex, which mediates electron transfer between photosystem II (PSII) and photosystem I (PSI), cyclic electron flow around PSI, and state transitions. The chain is Cytochrome f from Phalaenopsis aphrodite subsp. formosana (Moth orchid).